The sequence spans 328 residues: MPLHNLTRFPRLEFIGAPTPLEYLPRFSDYLGREIFIKRDDVIPMAMGGNKLRKLEFLAADALREGADTLITAGAIQSNHVRQTAAVAAKLGLHCVALLENPIGTTAENYLTNGNRLLLDLFNTQIEMCDALTDPNTQLEELATRVEAQGFRPYVIPVGGSNALGALGYVESALEIAQQCEGAVNISSVVVASGSAGTHAGLAVGLEHLMPESELIGVTVSRSVADQLPKVVNLQQAIAKELELTASAEILLWDDYFAPGYGVPNDEGMEAVKLLARLEGILLDPVYTGKAMAGLIDGISQKRFKDEGPILFIHTGGAPALFAYHPHV.

Lysine 51 is subject to N6-(pyridoxal phosphate)lysine.

The protein belongs to the ACC deaminase/D-cysteine desulfhydrase family. Homodimer. Pyridoxal 5'-phosphate serves as cofactor.

It catalyses the reaction D-cysteine + H2O = hydrogen sulfide + pyruvate + NH4(+) + H(+). Catalyzes the alpha,beta-elimination reaction of D-cysteine and of several D-cysteine derivatives. It could be a defense mechanism against D-cysteine. In Escherichia coli O7:K1 (strain IAI39 / ExPEC), this protein is D-cysteine desulfhydrase.